We begin with the raw amino-acid sequence, 385 residues long: Probable threonine protease PRSS50 (385 aa).

The first 39 residues, 1 to 39, serve as a signal peptide directing secretion; that stretch reads MGRWCQTVARGQRPRTSAPSRAGALLLLLLLLRSAGCWG. The Peptidase S1 domain maps to 93 to 358; sequence VSEGKVDPYR…YQHWIWDCLN (266 aa). A glycan (N-linked (GlcNAc...) asparagine) is linked at N133. A disulfide bond links C138 and C154. Active-site charge relay system residues include H153 and D206. 3 cysteine pairs are disulfide-bonded: C240/C316, C273/C296, and C306/C334. The N-linked (GlcNAc...) asparagine glycan is linked to N279. T310 serves as the catalytic Charge relay system.

It belongs to the peptidase S1 family. Testis specific. Differentially expressed in some breast cancer tissues.

It localises to the endoplasmic reticulum. Functionally, may be involved in proteolysis through its threonine endopeptidase activity. The protein is Probable threonine protease PRSS50 (PRSS50) of Homo sapiens (Human).